The following is a 420-amino-acid chain: MVDAADSKSAGHWSWGFKSPGSHPEAVMNTYNRFPLTLVRGRGCWVWDDQGRRHLDAVAGIATDTLGHSDRALRRSLGRQLRRLQHVSNLYRIPEQDALATWLVQHSCADSVFFCNSGAEANEAAIKLARKHGHLKRGIDRPRILTASASFHGRTLAAVSATGQPRYHQGFEPMVEGFDYFPYNDIHAFESLLERHEANGPAVAAVLLEPLQGEGGVHPGDAGFFQRLRHLCSERNILLILDEVQVGMGRSGRLWGYEQLGIEPDAFTLAKGLGGGHAIGALLVNAKADVFEPGDHASTFGGNPFACTAGLTVAQEIQRRGLLRNVEERGQQLQQGIQGLVARYPQLLQGVRGWGLLQGLVLHQDCGVTAPQLAKAAIEQRLLLVAAGATVLRMVPPLVISANEVRQLLRRLDATLAELV.

Pyridoxal 5'-phosphate-binding positions include 118 to 119 (GA) and Phe151. N(2)-acetyl-L-ornithine is bound at residue Arg154. Residue 242–245 (DEVQ) participates in pyridoxal 5'-phosphate binding. At Lys271 the chain carries N6-(pyridoxal phosphate)lysine. Position 298 (Ser298) interacts with N(2)-acetyl-L-ornithine. Thr299 provides a ligand contact to pyridoxal 5'-phosphate.

The protein belongs to the class-III pyridoxal-phosphate-dependent aminotransferase family. ArgD subfamily. Homodimer. Pyridoxal 5'-phosphate is required as a cofactor.

The protein resides in the cytoplasm. The catalysed reaction is N(2)-acetyl-L-ornithine + 2-oxoglutarate = N-acetyl-L-glutamate 5-semialdehyde + L-glutamate. Its pathway is amino-acid biosynthesis; L-arginine biosynthesis; N(2)-acetyl-L-ornithine from L-glutamate: step 4/4. The polypeptide is Acetylornithine aminotransferase (Parasynechococcus marenigrum (strain WH8102)).